We begin with the raw amino-acid sequence, 238 residues long: Uridylate kinase (238 aa).

An ATP-binding site is contributed by 12–15 (KLSG). Glycine 54 provides a ligand contact to UMP. Positions 55 and 59 each coordinate ATP. UMP contacts are provided by residues aspartate 74 and 135–142 (VGAPYFTT). The ATP site is built by threonine 162, tyrosine 168, and aspartate 171.

Belongs to the UMP kinase family. In terms of assembly, homohexamer.

The protein resides in the cytoplasm. The enzyme catalyses UMP + ATP = UDP + ADP. It participates in pyrimidine metabolism; CTP biosynthesis via de novo pathway; UDP from UMP (UMPK route): step 1/1. Inhibited by UTP. Its function is as follows. Catalyzes the reversible phosphorylation of UMP to UDP. The sequence is that of Uridylate kinase from Erythrobacter litoralis (strain HTCC2594).